We begin with the raw amino-acid sequence, 424 residues long: S-adenosylmethionine synthase (424 aa).

Position 14 (His-14) interacts with ATP. Asp-16 serves as a coordination point for Mg(2+). Residue Glu-42 participates in K(+) binding. L-methionine contacts are provided by Glu-55 and Gln-98. A flexible loop region spans residues 98–108; the sequence is QSNDISRGIER. ATP contacts are provided by residues 165–167, 242–243, Asp-251, 257–258, Ala-274, and Lys-278; these read DAK, KF, and RK. Asp-251 is a binding site for L-methionine. Lys-282 contributes to the L-methionine binding site.

The protein belongs to the AdoMet synthase family. In terms of assembly, homotetramer; dimer of dimers. The cofactor is Mg(2+). K(+) serves as cofactor.

The protein localises to the cytoplasm. The enzyme catalyses L-methionine + ATP + H2O = S-adenosyl-L-methionine + phosphate + diphosphate. The protein operates within amino-acid biosynthesis; S-adenosyl-L-methionine biosynthesis; S-adenosyl-L-methionine from L-methionine: step 1/1. Functionally, catalyzes the formation of S-adenosylmethionine (AdoMet) from methionine and ATP. The overall synthetic reaction is composed of two sequential steps, AdoMet formation and the subsequent tripolyphosphate hydrolysis which occurs prior to release of AdoMet from the enzyme. In Azobacteroides pseudotrichonymphae genomovar. CFP2, this protein is S-adenosylmethionine synthase.